Reading from the N-terminus, the 406-residue chain is Phosphopentomutase (406 aa).

Mn(2+) is bound by residues Asp10, Asp305, His310, Asp346, His347, and His358.

The protein belongs to the phosphopentomutase family. Mn(2+) is required as a cofactor.

It is found in the cytoplasm. It catalyses the reaction 2-deoxy-alpha-D-ribose 1-phosphate = 2-deoxy-D-ribose 5-phosphate. It carries out the reaction alpha-D-ribose 1-phosphate = D-ribose 5-phosphate. Its pathway is carbohydrate degradation; 2-deoxy-D-ribose 1-phosphate degradation; D-glyceraldehyde 3-phosphate and acetaldehyde from 2-deoxy-alpha-D-ribose 1-phosphate: step 1/2. Functionally, isomerase that catalyzes the conversion of deoxy-ribose 1-phosphate (dRib-1-P) and ribose 1-phosphate (Rib-1-P) to deoxy-ribose 5-phosphate (dRib-5-P) and ribose 5-phosphate (Rib-5-P), respectively. This Rhizobium rhizogenes (strain K84 / ATCC BAA-868) (Agrobacterium radiobacter) protein is Phosphopentomutase.